The sequence spans 86 residues: Small ribosomal subunit protein uS17 (86 aa).

This sequence belongs to the universal ribosomal protein uS17 family. As to quaternary structure, part of the 30S ribosomal subunit.

In terms of biological role, one of the primary rRNA binding proteins, it binds specifically to the 5'-end of 16S ribosomal RNA. This chain is Small ribosomal subunit protein uS17, found in Shouchella clausii (strain KSM-K16) (Alkalihalobacillus clausii).